Reading from the N-terminus, the 225-residue chain is Octanoyltransferase (225 aa).

The 182-residue stretch at 29-210 folds into the BPL/LPL catalytic domain; sequence PDTDDEIWVV…RLIAHLDGAT (182 aa). Substrate contacts are provided by residues 69 to 76, 141 to 143, and 154 to 156; these read RGGQITYH, ALG, and GLS. The active-site Acyl-thioester intermediate is C172.

This sequence belongs to the LipB family.

Its subcellular location is the cytoplasm. It catalyses the reaction octanoyl-[ACP] + L-lysyl-[protein] = N(6)-octanoyl-L-lysyl-[protein] + holo-[ACP] + H(+). The protein operates within protein modification; protein lipoylation via endogenous pathway; protein N(6)-(lipoyl)lysine from octanoyl-[acyl-carrier-protein]: step 1/2. Its function is as follows. Catalyzes the transfer of endogenously produced octanoic acid from octanoyl-acyl-carrier-protein onto the lipoyl domains of lipoate-dependent enzymes. Lipoyl-ACP can also act as a substrate although octanoyl-ACP is likely to be the physiological substrate. The sequence is that of Octanoyltransferase from Burkholderia pseudomallei (strain K96243).